The primary structure comprises 355 residues: Elongation factor Ts (355 aa).

The segment at 82 to 85 (TDFV) is involved in Mg(2+) ion dislocation from EF-Tu.

It belongs to the EF-Ts family.

The protein resides in the cytoplasm. Its function is as follows. Associates with the EF-Tu.GDP complex and induces the exchange of GDP to GTP. It remains bound to the aminoacyl-tRNA.EF-Tu.GTP complex up to the GTP hydrolysis stage on the ribosome. The chain is Elongation factor Ts from Helicobacter hepaticus (strain ATCC 51449 / 3B1).